Reading from the N-terminus, the 641-residue chain is Threonine--tRNA ligase (641 aa).

Residues 1-61 form the TGS domain; sequence MIKISFFDNQ…KKNGNLEILT (61 aa). Positions 240–538 are catalytic; the sequence is DHKKINKELD…LVEETKGVFP (299 aa). Residues Cys334, His385, and His515 each contribute to the Zn(2+) site.

The protein belongs to the class-II aminoacyl-tRNA synthetase family. In terms of assembly, homodimer. Zn(2+) serves as cofactor.

Its subcellular location is the cytoplasm. The enzyme catalyses tRNA(Thr) + L-threonine + ATP = L-threonyl-tRNA(Thr) + AMP + diphosphate + H(+). In terms of biological role, catalyzes the attachment of threonine to tRNA(Thr) in a two-step reaction: L-threonine is first activated by ATP to form Thr-AMP and then transferred to the acceptor end of tRNA(Thr). Also edits incorrectly charged L-seryl-tRNA(Thr). This is Threonine--tRNA ligase from Aster yellows witches'-broom phytoplasma (strain AYWB).